The primary structure comprises 510 residues: GMP synthase [glutamine-hydrolyzing] (510 aa).

Residues 5-195 enclose the Glutamine amidotransferase type-1 domain; that stretch reads LVIVLDFGGQ…LFNIADLSAD (191 aa). The active-site Nucleophile is the Cys82. Residues His169 and Glu171 contribute to the active site. In terms of domain architecture, GMPS ATP-PPase spans 196–385; that stretch reads WTMGSYIEET…LGLHREIVER (190 aa). 223–229 is an ATP binding site; the sequence is SGGIDST.

As to quaternary structure, homodimer.

The enzyme catalyses XMP + L-glutamine + ATP + H2O = GMP + L-glutamate + AMP + diphosphate + 2 H(+). Its pathway is purine metabolism; GMP biosynthesis; GMP from XMP (L-Gln route): step 1/1. Catalyzes the synthesis of GMP from XMP. In Natranaerobius thermophilus (strain ATCC BAA-1301 / DSM 18059 / JW/NM-WN-LF), this protein is GMP synthase [glutamine-hydrolyzing].